The sequence spans 104 residues: Ig lambda-2 chain C region (104 aa).

In terms of domain architecture, Ig-like spans 6–99; that stretch reads PTLTVFPPSS…EGDTVEKSLS (94 aa). A disulfide bond links cysteine 27 and cysteine 85.

In Mus musculus (Mouse), this protein is Ig lambda-2 chain C region (Iglc2).